Consider the following 250-residue polypeptide: Pyrroloquinoline-quinone synthase (250 aa).

This sequence belongs to the PqqC family.

The enzyme catalyses 6-(2-amino-2-carboxyethyl)-7,8-dioxo-1,2,3,4,7,8-hexahydroquinoline-2,4-dicarboxylate + 3 O2 = pyrroloquinoline quinone + 2 H2O2 + 2 H2O + H(+). It functions in the pathway cofactor biosynthesis; pyrroloquinoline quinone biosynthesis. In terms of biological role, ring cyclization and eight-electron oxidation of 3a-(2-amino-2-carboxyethyl)-4,5-dioxo-4,5,6,7,8,9-hexahydroquinoline-7,9-dicarboxylic-acid to PQQ. In Xanthomonas axonopodis pv. citri (strain 306), this protein is Pyrroloquinoline-quinone synthase.